A 335-amino-acid chain; its full sequence is Methionine import ATP-binding protein MetN (335 aa).

Positions 2 to 241 (IQFQRLHKSY…PKHATTRRFV (240 aa)) constitute an ABC transporter domain. 38–45 (GHSGAGKS) is an ATP binding site.

It belongs to the ABC transporter superfamily. Methionine importer (TC 3.A.1.24) family. In terms of assembly, the complex is composed of two ATP-binding proteins (MetN), two transmembrane proteins (MetI) and a solute-binding protein (MetQ).

The protein resides in the cell inner membrane. The catalysed reaction is L-methionine(out) + ATP + H2O = L-methionine(in) + ADP + phosphate + H(+). The enzyme catalyses D-methionine(out) + ATP + H2O = D-methionine(in) + ADP + phosphate + H(+). Functionally, part of the ABC transporter complex MetNIQ involved in methionine import. Responsible for energy coupling to the transport system. The polypeptide is Methionine import ATP-binding protein MetN (Xanthomonas axonopodis pv. citri (strain 306)).